A 168-amino-acid chain; its full sequence is Cytochrome c-type biogenesis protein CcmE (168 aa).

The Cytoplasmic portion of the chain corresponds to 1–7; the sequence is MTRKKRR. A helical; Signal-anchor for type II membrane protein transmembrane segment spans residues 8 to 28; it reads LYMLGLALLGLGTATALTLSA. Residues 29–168 lie on the Periplasmic side of the membrane; it reads FEENIVFFYS…KVHATTTLKP (140 aa). Heme contacts are provided by H122 and Y126. Residues 149 to 168 are disordered; it reads SIYTPADSDDKVHATTTLKP.

It belongs to the CcmE/CycJ family.

The protein localises to the cell inner membrane. Heme chaperone required for the biogenesis of c-type cytochromes. Transiently binds heme delivered by CcmC and transfers the heme to apo-cytochromes in a process facilitated by CcmF and CcmH. The protein is Cytochrome c-type biogenesis protein CcmE of Rhodospirillum centenum (strain ATCC 51521 / SW).